Consider the following 237-residue polypeptide: Large ribosomal subunit protein uL3 (237 aa).

Disordered regions lie at residues 133–155 (ASHGNSITHRSHGSTGQRQDPGK) and 213–237 (PENAPKPAGLRAGAKAEAAATEGAE). Residues 135 to 150 (HGNSITHRSHGSTGQR) are compositionally biased toward polar residues. Residue Q151 is modified to N5-methylglutamine. Positions 220–237 (AGLRAGAKAEAAATEGAE) are enriched in low complexity.

This sequence belongs to the universal ribosomal protein uL3 family. Part of the 50S ribosomal subunit. Forms a cluster with proteins L14 and L19. In terms of processing, methylated by PrmB.

Functionally, one of the primary rRNA binding proteins, it binds directly near the 3'-end of the 23S rRNA, where it nucleates assembly of the 50S subunit. The protein is Large ribosomal subunit protein uL3 of Brucella canis (strain ATCC 23365 / NCTC 10854 / RM-666).